Here is a 182-residue protein sequence, read N- to C-terminus: Adenylate kinase (182 aa).

12–17 is an ATP binding site; that stretch reads GAGKGT. The NMP stretch occupies residues 32 to 61; the sequence is STGDLLRTEVGAKTPLGQEAAAVMNRGELV. Residues Thr33, Arg38, 59-61, 85-88, and Gln92 each bind AMP; these read ELV and GFPR. An LID region spans residues 126 to 132; the sequence is SRGRSDD. Arg127 serves as a coordination point for ATP. AMP is bound by residues Arg129 and Arg140. Gly168 provides a ligand contact to ATP.

It belongs to the adenylate kinase family. Monomer.

Its subcellular location is the cytoplasm. It carries out the reaction AMP + ATP = 2 ADP. It participates in purine metabolism; AMP biosynthesis via salvage pathway; AMP from ADP: step 1/1. In terms of biological role, catalyzes the reversible transfer of the terminal phosphate group between ATP and AMP. Plays an important role in cellular energy homeostasis and in adenine nucleotide metabolism. The polypeptide is Adenylate kinase (Prochlorococcus marinus (strain MIT 9313)).